The sequence spans 194 residues: uncharacterized protein (194 aa).

The protein to A.rhizogenes plasmid pRia4B ORF-3 in virA region.

This is an uncharacterized protein from Sinorhizobium fredii (strain NBRC 101917 / NGR234).